A 375-amino-acid chain; its full sequence is MDATTPAQTVGVEIYLGPVWPAPSNSTPLALNLSLALREDAPGNLTGDLSEHQQYVIALFLSCLYTIFLFPIGFVGNILILVVNISFREKMTIPDLYFINLAAADLILVADSLIEVFNLDEQYYDIAVLCTFMSLFLQINMYSSVFFLTWMSFDRYLALAKAMRCGLFRTKHHARLSCGLIWMASVSATLVPFTAVHLRHTEEACFCFADVREVQWLEVTLGFIMPFAIIGLCYSLIVRALIRAHRHRGLRPRRQKALRMIFAVVLVFFICWLPENVFISVHLLQWTQPGDTPCKQSFRHAYPLTGHIVNLAAFSNSCLNPLIYSFLGETFRDKLRLYVEQKTSLPALNRFCHATLKAVIPDSTEQSEVRFSSAV.

Methionine 1 carries the post-translational modification N-acetylmethionine. Over 1–62 the chain is Extracellular; it reads MDATTPAQTV…QQYVIALFLS (62 aa). N-linked (GlcNAc...) asparagine glycosylation is found at asparagine 32 and asparagine 44. Residues 63–84 traverse the membrane as a helical segment; the sequence is CLYTIFLFPIGFVGNILILVVN. At 85-96 the chain is on the cytoplasmic side; sequence ISFREKMTIPDL. Residues 97 to 120 traverse the membrane as a helical segment; sequence YFINLAAADLILVADSLIEVFNLD. The Extracellular portion of the chain corresponds to 121 to 132; it reads EQYYDIAVLCTF. Residues cysteine 130 and cysteine 207 are joined by a disulfide bond. A helical transmembrane segment spans residues 133-153; the sequence is MSLFLQINMYSSVFFLTWMSF. Topologically, residues 154–175 are cytoplasmic; it reads DRYLALAKAMRCGLFRTKHHAR. The chain crosses the membrane as a helical span at residues 176 to 194; the sequence is LSCGLIWMASVSATLVPFT. At 195–220 the chain is on the extracellular side; that stretch reads AVHLRHTEEACFCFADVREVQWLEVT. A helical transmembrane segment spans residues 221–236; it reads LGFIMPFAIIGLCYSL. Topologically, residues 237 to 259 are cytoplasmic; sequence IVRALIRAHRHRGLRPRRQKALR. A helical membrane pass occupies residues 260 to 280; it reads MIFAVVLVFFICWLPENVFIS. Residues 281 to 306 lie on the Extracellular side of the membrane; the sequence is VHLLQWTQPGDTPCKQSFRHAYPLTG. The chain crosses the membrane as a helical span at residues 307 to 327; that stretch reads HIVNLAAFSNSCLNPLIYSFL. Topologically, residues 328–375 are cytoplasmic; the sequence is GETFRDKLRLYVEQKTSLPALNRFCHATLKAVIPDSTEQSEVRFSSAV.

This sequence belongs to the G-protein coupled receptor 1 family. Interacts with RAMP3; the interaction confers proper subcellular localization and function in cardioprotection. Interacts with KRT7 and KRT8. Interacts with EGFR; the interaction increases after agonist-induced stimulation in cancer-associated fibroblasts (CAF). Interacts with EGFR and ESR1. Interacts (via C-terminus tail motif) with DLG4 (via N-terminus tandem pair of PDZ domains); the interaction is direct and induces the increase of GPER1 protein levels residing at the plasma membrane surface in a estradiol-independent manner. Homodimer. Heterodimer; heterodimerizes with other G-protein-coupled receptor (GPCRs) like CRHR1, HTR1A and PAQR8. Post-translationally, ubiquitinated; ubiquitination occurs at the plasma membrane and leads to proteasome-mediated degradation. N-glycosylated. In terms of tissue distribution, expressed in brain, heart, spleen, preadipocytes, mature adipocytes and primary hippocampal neurons. Expressed in neurons of the hippocampus, hypothalamic paraventricular nucleus (PVH), supraoptic nucleus (SON) and the median eminence. Expressed in the nucleus ambiguous (at protein level). Expressed in brain, pituitary gland, adrenal medulla, renal pelvis, ovary, endothelial cells, visceral fat tissues and islets of Langerhans.

The protein localises to the nucleus. Its subcellular location is the cytoplasm. It localises to the perinuclear region. It is found in the cytoskeleton. The protein resides in the cell membrane. The protein localises to the endoplasmic reticulum membrane. Its subcellular location is the golgi apparatus membrane. It localises to the cell projection. It is found in the dendrite. The protein resides in the cytoplasmic vesicle membrane. The protein localises to the early endosome. Its subcellular location is the recycling endosome. It localises to the golgi apparatus. It is found in the trans-Golgi network. The protein resides in the dendritic spine membrane. The protein localises to the axon. Its subcellular location is the postsynaptic density. It localises to the mitochondrion membrane. Functionally, G-protein coupled estrogen receptor that binds to 17-beta-estradiol (E2) with high affinity, leading to rapid and transient activation of numerous intracellular signaling pathways. Stimulates cAMP production, calcium mobilization and tyrosine kinase Src inducing the release of heparin-bound epidermal growth factor (HB-EGF) and subsequent transactivation of the epidermal growth factor receptor (EGFR), activating downstream signaling pathways such as PI3K/Akt and ERK/MAPK. Mediates pleiotropic functions among others in the cardiovascular, endocrine, reproductive, immune and central nervous systems. Has a role in cardioprotection by reducing cardiac hypertrophy and perivascular fibrosis in a RAMP3-dependent manner. Regulates arterial blood pressure by stimulating vasodilation and reducing vascular smooth muscle and microvascular endothelial cell proliferation. Plays a role in blood glucose homeostasis contributing to the insulin secretion response by pancreatic beta cells. Triggers mitochondrial apoptosis during pachytene spermatocyte differentiation. Stimulates uterine epithelial cell proliferation. Enhances uterine contractility in response to oxytocin. Contributes to thymic atrophy by inducing apoptosis. Attenuates TNF-mediated endothelial expression of leukocyte adhesion molecules. Promotes neuritogenesis in developing hippocampal neurons. Plays a role in acute neuroprotection against NMDA-induced excitotoxic neuronal death. Increases firing activity and intracellular calcium oscillations in luteinizing hormone-releasing hormone (LHRH) neurons. Inhibits early osteoblast proliferation at growth plate during skeletal development. Inhibits mature adipocyte differentiation and lipid accumulation. Involved in the recruitment of beta-arrestin 2 ARRB2 at the plasma membrane in epithelial cells. Also functions as a receptor for aldosterone mediating rapid regulation of vascular contractibility through the PI3K/ERK signaling pathway. Involved in cancer progression regulation. Stimulates cancer-associated fibroblast (CAF) proliferation by a rapid genomic response through the EGFR/ERK transduction pathway. Associated with EGFR, may act as a transcription factor activating growth regulatory genes (c-fos, cyclin D1). Promotes integrin alpha-5/beta-1 and fibronectin (FN) matrix assembly in breast cancer cells. This is G-protein coupled estrogen receptor 1 (Gper1) from Mus musculus (Mouse).